Reading from the N-terminus, the 91-residue chain is Proline, histidine and glycine-rich protein 1 (91 aa).

A disordered region spans residues 1-91; the sequence is MHPGGKGHCG…HCGPHPGPHH (91 aa). Composition is skewed to gly residues over residues 33–42, 49–63, and 70–82; these read HPGHGPGHCP, GHGGPSHGHGPGHCP, and GHGGPSHGHGPGH.

This Mus musculus (Mouse) protein is Proline, histidine and glycine-rich protein 1 (Phgr1).